The primary structure comprises 746 residues: EF-hand domain-containing family member C2 (746 aa).

DM10 domains lie at 75 to 182, 226 to 367, and 429 to 536; these read DKQV…RKMG, DGHV…RTKY, and ESNT…EKHA. The 36-residue stretch at 557–592 folds into the EF-hand domain; sequence PRSREIRQVFAAADPQHTKVIEYDPFRNLIVSITDG.

The protein localises to the cytoplasm. It localises to the cytoskeleton. It is found in the cilium axoneme. Microtubule inner protein (MIP) part of the dynein-decorated doublet microtubules (DMTs) in cilia axoneme, which is required for motile cilia beating. The chain is EF-hand domain-containing family member C2 (EFHC2) from Gallus gallus (Chicken).